The following is a 206-amino-acid chain: Ion-translocating oxidoreductase complex subunit G (206 aa).

A helical transmembrane segment spans residues 9 to 29 (GITLALFAAGSTGLTAVINQM). FMN phosphoryl threonine is present on threonine 174.

Belongs to the RnfG family. As to quaternary structure, the complex is composed of six subunits: RsxA, RsxB, RsxC, RsxD, RsxE and RsxG. FMN is required as a cofactor.

The protein resides in the cell inner membrane. Part of a membrane-bound complex that couples electron transfer with translocation of ions across the membrane. Required to maintain the reduced state of SoxR. The chain is Ion-translocating oxidoreductase complex subunit G from Salmonella typhi.